Reading from the N-terminus, the 116-residue chain is Immunoglobulin heavy variable 3-66 (116 aa).

A signal peptide spans 1–19 (MEFGLSWVFLVAILKGVQC). Positions 20–44 (EVQLVESGGGLIQPGGSLRLSCAAS) are framework-1. Residues 20-116 (EVQLVESGGG…EDTAVYYCAR (97 aa)) form the Ig-like domain. Cys-41 and Cys-114 form a disulfide bridge. Positions 45–52 (GFTVSSNY) are complementarity-determining-1. Residues 53-69 (MSWVRQAPGKGLEWVSV) form a framework-2 region. A complementarity-determining-2 region spans residues 70–76 (IYSCGST). The framework-3 stretch occupies residues 77-114 (YYADSVKGRFTISRDNSKNTLYLQMNSLRAEDTAVYYC). Residues 115–116 (AR) form a complementarity-determining-3 region.

As to quaternary structure, immunoglobulins are composed of two identical heavy chains and two identical light chains; disulfide-linked.

The protein localises to the secreted. The protein resides in the cell membrane. In terms of biological role, v region of the variable domain of immunoglobulin heavy chains that participates in the antigen recognition. Immunoglobulins, also known as antibodies, are membrane-bound or secreted glycoproteins produced by B lymphocytes. In the recognition phase of humoral immunity, the membrane-bound immunoglobulins serve as receptors which, upon binding of a specific antigen, trigger the clonal expansion and differentiation of B lymphocytes into immunoglobulins-secreting plasma cells. Secreted immunoglobulins mediate the effector phase of humoral immunity, which results in the elimination of bound antigens. The antigen binding site is formed by the variable domain of one heavy chain, together with that of its associated light chain. Thus, each immunoglobulin has two antigen binding sites with remarkable affinity for a particular antigen. The variable domains are assembled by a process called V-(D)-J rearrangement and can then be subjected to somatic hypermutations which, after exposure to antigen and selection, allow affinity maturation for a particular antigen. The sequence is that of Immunoglobulin heavy variable 3-66 from Homo sapiens (Human).